A 110-amino-acid chain; its full sequence is UPF0213 protein DVU_3309 (110 aa).

The region spanning 8–83 (EVWFVYLLRC…KRQPTDQKLA (76 aa)) is the GIY-YIG domain.

It belongs to the UPF0213 family.

The protein is UPF0213 protein DVU_3309 of Nitratidesulfovibrio vulgaris (strain ATCC 29579 / DSM 644 / CCUG 34227 / NCIMB 8303 / VKM B-1760 / Hildenborough) (Desulfovibrio vulgaris).